The following is a 325-amino-acid chain: Eukaryotic translation initiation factor 3 subunit I (325 aa).

WD repeat units lie at residues 8–47, 50–89, 144–183, 186–225, and 283–324; these read GHERSITQIKYNREGDLLFSVAKDPIANVWYSVNGERLGT, GHTGAVWCVDVDWDTKNVLTGSADNSCRLWDCETGKQLAL, CSESKITSAVWGPLGEFVIAGHENGEINQFSAKSGEVLKK, EHTKQINDIQSSVDLTMIISASKDCTAKMFDSSTLEHVKT, and GHFG…FELE.

The protein belongs to the eIF-3 subunit I family. As to quaternary structure, component of the eukaryotic translation initiation factor 3 (eIF-3) complex, which is composed of 13 subunits: eif3a, eif3b, eif3c, eif3d, eif3e, eif3f, eif3g, eif3h, eif3i, eif3j, eif3k, eif3l and eif3m.

It is found in the cytoplasm. In terms of biological role, component of the eukaryotic translation initiation factor 3 (eIF-3) complex, which is involved in protein synthesis of a specialized repertoire of mRNAs and, together with other initiation factors, stimulates binding of mRNA and methionyl-tRNAi to the 40S ribosome. The eIF-3 complex specifically targets and initiates translation of a subset of mRNAs involved in cell proliferation. The sequence is that of Eukaryotic translation initiation factor 3 subunit I (eif3i) from Danio rerio (Zebrafish).